A 525-amino-acid polypeptide reads, in one-letter code: Probable protein kinase UbiB (525 aa).

A Protein kinase domain is found at 118–500 (DFERVPVASA…QKRTNRLLQG (383 aa)). Residues 124–132 (VASASIAQV) and K150 each bind ATP. Residue D285 is the Proton acceptor of the active site. Residues 501–521 (LLLFGVAVGVGAVLARAFLAL) form a helical membrane-spanning segment.

The protein belongs to the ABC1 family. UbiB subfamily.

The protein resides in the cell inner membrane. It functions in the pathway cofactor biosynthesis; ubiquinone biosynthesis [regulation]. Its function is as follows. Is probably a protein kinase regulator of UbiI activity which is involved in aerobic coenzyme Q (ubiquinone) biosynthesis. This Paraburkholderia phytofirmans (strain DSM 17436 / LMG 22146 / PsJN) (Burkholderia phytofirmans) protein is Probable protein kinase UbiB.